Reading from the N-terminus, the 474-residue chain is tRNA-2-methylthio-N(6)-dimethylallyladenosine synthase (474 aa).

One can recognise an MTTase N-terminal domain in the interval lysine 3–glycine 120. [4Fe-4S] cluster is bound by residues cysteine 12, cysteine 49, cysteine 83, cysteine 157, cysteine 161, and cysteine 164. The region spanning arginine 143–glutamine 375 is the Radical SAM core domain. In terms of domain architecture, TRAM spans arginine 378–arginine 441.

Belongs to the methylthiotransferase family. MiaB subfamily. Monomer. [4Fe-4S] cluster is required as a cofactor.

The protein resides in the cytoplasm. It catalyses the reaction N(6)-dimethylallyladenosine(37) in tRNA + (sulfur carrier)-SH + AH2 + 2 S-adenosyl-L-methionine = 2-methylsulfanyl-N(6)-dimethylallyladenosine(37) in tRNA + (sulfur carrier)-H + 5'-deoxyadenosine + L-methionine + A + S-adenosyl-L-homocysteine + 2 H(+). Functionally, catalyzes the methylthiolation of N6-(dimethylallyl)adenosine (i(6)A), leading to the formation of 2-methylthio-N6-(dimethylallyl)adenosine (ms(2)i(6)A) at position 37 in tRNAs that read codons beginning with uridine. The polypeptide is tRNA-2-methylthio-N(6)-dimethylallyladenosine synthase (Serratia proteamaculans (strain 568)).